Here is a 251-residue protein sequence, read N- to C-terminus: Phosphomannomutase (251 aa).

Asp-18 functions as the Nucleophile in the catalytic mechanism. The Mg(2+) site is built by Asp-18 and Asp-20. The Proton donor/acceptor role is filled by Asp-20. Alpha-D-mannose 1-phosphate is bound by residues Arg-27, Arg-129, Arg-140, Arg-147, Ser-185, and Asp-187. Mg(2+) is bound by residues Asp-213, Phe-225, Asp-227, and Thr-230.

This sequence belongs to the eukaryotic PMM family. As to quaternary structure, homodimer. Mg(2+) serves as cofactor.

It localises to the cytoplasm. It catalyses the reaction alpha-D-mannose 1-phosphate = D-mannose 6-phosphate. The protein operates within nucleotide-sugar biosynthesis; GDP-alpha-D-mannose biosynthesis; alpha-D-mannose 1-phosphate from D-fructose 6-phosphate: step 2/2. In terms of biological role, catalyzes the interconversion of mannose-6-phosphate to mannose-1-phosphate, the precursor for the synthesis of GDP-mannose. GDP-mannose is an essential sugar nucleotide for the synthesis of D-mannose-containing cell wall polysaccharides (galactomannans and glucomannans), glycolipids, glycoproteins and the antioxidant L-ascorbate. This chain is Phosphomannomutase, found in Galdieria sulphuraria (Red alga).